Consider the following 101-residue polypeptide: MIQQERLLKVLRAPHVSEKATNNTEKSNTIVFKVALDANKVEIANAVEQLFEVKVDSVRTVVVKGKTKRRGAKMGQRSDWKKAYVTLQEGQSLDFVEGAAE.

It belongs to the universal ribosomal protein uL23 family. As to quaternary structure, part of the 50S ribosomal subunit. Contacts protein L29, and trigger factor when it is bound to the ribosome.

Its function is as follows. One of the early assembly proteins it binds 23S rRNA. One of the proteins that surrounds the polypeptide exit tunnel on the outside of the ribosome. Forms the main docking site for trigger factor binding to the ribosome. The chain is Large ribosomal subunit protein uL23 from Histophilus somni (strain 129Pt) (Haemophilus somnus).